The following is a 349-amino-acid chain: Magnesium-protoporphyrin IX monomethyl ester [oxidative] cyclase (349 aa).

The tract at residues M1–H22 is disordered.

The protein belongs to the AcsF family. Fe cation is required as a cofactor.

The catalysed reaction is Mg-protoporphyrin IX 13-monomethyl ester + 3 NADPH + 3 O2 + 2 H(+) = 3,8-divinyl protochlorophyllide a + 3 NADP(+) + 5 H2O. It functions in the pathway porphyrin-containing compound metabolism; chlorophyll biosynthesis (light-independent). In terms of biological role, catalyzes the formation of the isocyclic ring in chlorophyll biosynthesis. Mediates the cyclase reaction, which results in the formation of divinylprotochlorophyllide (Pchlide) characteristic of all chlorophylls from magnesium-protoporphyrin IX 13-monomethyl ester (MgPMME). This Prochlorococcus marinus (strain MIT 9211) protein is Magnesium-protoporphyrin IX monomethyl ester [oxidative] cyclase.